The chain runs to 682 residues: PWWP domain-containing DNA repair factor 3A (682 aa).

Phosphoserine is present on S105. Residues 121-145 are disordered; the sequence is EKTDADVASQVSSAPSPSLLGEDGQ. Residues 127–140 show a composition bias toward low complexity; that stretch reads VASQVSSAPSPSLL. Residue S168 is modified to Phosphoserine. Disordered regions lie at residues 179–318 and 334–369; these read GPKT…GAAP and GAGD…EEEP. Basic and acidic residues predominate over residues 203–220; the sequence is HGQESTTKKRQRNLGEKP. Phosphoserine occurs at positions 345 and 346. Residues 346–357 are compositionally biased toward polar residues; it reads SEESTGFKSTHS. One can recognise a PWWP domain in the interval 383–444; it reads VGMLVWLKYQ…KHFDCKEKHA (62 aa).

Belongs to the PWWP3A family. As to quaternary structure, interacts with TP53BP1 (via BRCT domain); the interaction is not dependent on its phosphorylation status. Binds nucleosomes. Interacts with trimethylated 'Lys-36' of histone H3 (H3K36me3) (in vitro).

The protein resides in the nucleus. Involved in the DNA damage response pathway by contributing to the maintenance of chromatin architecture. Recruited to the vicinity of DNA breaks by TP53BP1 and plays an accessory role to facilitate damage-induced chromatin changes and promoting chromatin relaxation. Required for efficient DNA repair and cell survival following DNA damage. The sequence is that of PWWP domain-containing DNA repair factor 3A (Pwwp3a) from Mus musculus (Mouse).